We begin with the raw amino-acid sequence, 36 residues long: Amanexitide proprotein 2 (36 aa).

Residues 1–10 (MSDINATRLP) constitute a propeptide that is removed on maturation. Residues 11–19 (VFSLPVFFP) constitute a cross-link (cyclopeptide (Val-Pro)). Positions 20–36 (FVSDDIQAVLTRGESLC) are excised as a propeptide.

The protein belongs to the MSDIN fungal toxin family. Processed by the macrocyclase-peptidase enzyme POPB to yield a toxic cyclic nonapeptide. POPB first removes 10 residues from the N-terminus. Conformational trapping of the remaining peptide forces the enzyme to release this intermediate rather than proceed to macrocyclization. The enzyme rebinds the remaining peptide in a different conformation and catalyzes macrocyclization of the N-terminal 9 residues. Expressed in basidiocarps.

Its function is as follows. Cyclic nonapeptide that belongs to the MSDIN-like toxin family responsible for a large number of food poisoning cases and deaths. The polypeptide is Amanexitide proprotein 2 (Amanita exitialis (Guangzhou destroying angel)).